A 356-amino-acid chain; its full sequence is MSGKTKRLMVMAGGTGGHVFPGLAVAHHLMAQGWQVRWLGTADRMEASLVPQHGIEIDFIKISGLRGKGLMAQLTAPIRIYRAVRQAQKIMRDYQPDVVLGMGGYVSGPGGLAAWLCGVPVVLHEQNGIAGLTNRWLARIAKKVLQAFPGAFPNADVVGNPVRTDVLALPLPAVRLSGREGPIRVLVIGGSQGARILNQTLPLVAASLGEQITLWHQVGKGALPEVSQAYQQAGQAGHQVVEFIDDMAAAYAWADVVVCRSGALTVSEVAAAGLPAIFVPFQHKDRQQYWNALPLEKAGAAKIIEQPQFTATSVSSLLAGWDRATLLSMAERARSVAIPDATERVAAEVVAASKSA.

UDP-N-acetyl-alpha-D-glucosamine-binding positions include T15–G17, N127, R163, S191, I244, A263–E268, and Q288.

The protein belongs to the glycosyltransferase 28 family. MurG subfamily.

It localises to the cell inner membrane. The enzyme catalyses di-trans,octa-cis-undecaprenyl diphospho-N-acetyl-alpha-D-muramoyl-L-alanyl-D-glutamyl-meso-2,6-diaminopimeloyl-D-alanyl-D-alanine + UDP-N-acetyl-alpha-D-glucosamine = di-trans,octa-cis-undecaprenyl diphospho-[N-acetyl-alpha-D-glucosaminyl-(1-&gt;4)]-N-acetyl-alpha-D-muramoyl-L-alanyl-D-glutamyl-meso-2,6-diaminopimeloyl-D-alanyl-D-alanine + UDP + H(+). Its pathway is cell wall biogenesis; peptidoglycan biosynthesis. Functionally, cell wall formation. Catalyzes the transfer of a GlcNAc subunit on undecaprenyl-pyrophosphoryl-MurNAc-pentapeptide (lipid intermediate I) to form undecaprenyl-pyrophosphoryl-MurNAc-(pentapeptide)GlcNAc (lipid intermediate II). This Yersinia pseudotuberculosis serotype O:1b (strain IP 31758) protein is UDP-N-acetylglucosamine--N-acetylmuramyl-(pentapeptide) pyrophosphoryl-undecaprenol N-acetylglucosamine transferase.